A 90-amino-acid chain; its full sequence is Barrier-to-autointegration factor-like protein (90 aa).

It belongs to the BAF family. As to quaternary structure, homodimer. Heterodimerizes with BANF1. In terms of tissue distribution, expressed strongly in testis and pancreas. Also detected in brain, colon, liver, lung, ovary, placenta, prostate, small intestine, spleen and thymus. Not detected in heart, kidney and skeletal muscle.

The protein resides in the nucleus. It is found in the cytoplasm. Functionally, may play a role in BANF1 regulation and influence tissue-specific roles of BANF1. In Homo sapiens (Human), this protein is Barrier-to-autointegration factor-like protein (BANF2).